The sequence spans 246 residues: UPF0309 protein ABC0887 (246 aa).

One can recognise an SIS domain in the interval 33 to 212; the sequence is MVHAIKEGKS…VLKMIEQLEE (180 aa).

Belongs to the UPF0309 family.

The polypeptide is UPF0309 protein ABC0887 (Shouchella clausii (strain KSM-K16) (Alkalihalobacillus clausii)).